Reading from the N-terminus, the 138-residue chain is uncharacterized protein (138 aa).

Positions 1–27 (MEGELIENNGLDIYDTSETPKKRGRPA) are disordered.

This is an uncharacterized protein from Escherichia coli (strain K12).